We begin with the raw amino-acid sequence, 186 residues long: Imidazoleglycerol-phosphate dehydratase (186 aa).

Belongs to the imidazoleglycerol-phosphate dehydratase family.

Its subcellular location is the cytoplasm. The enzyme catalyses D-erythro-1-(imidazol-4-yl)glycerol 3-phosphate = 3-(imidazol-4-yl)-2-oxopropyl phosphate + H2O. Its pathway is amino-acid biosynthesis; L-histidine biosynthesis; L-histidine from 5-phospho-alpha-D-ribose 1-diphosphate: step 6/9. The protein is Imidazoleglycerol-phosphate dehydratase of Dictyoglomus thermophilum (strain ATCC 35947 / DSM 3960 / H-6-12).